We begin with the raw amino-acid sequence, 277 residues long: MKKTLIALAVAASAAVSGSVMAADWTEGQPGDIIIGGEITSPSVKWLWKTGEGLSSFSNTTNEIVKRKLNISVPTDELFLAAKMSDGIKGVFVGNTLIPKIEMASYDGSVITPSFTSNTAMDIAVKVKNSGDNTELGTLSVPLSFGAAVATIFDGDTTDSAVAHIIGGSAGTVFEGLVNPGRFTDQNIAYKWNGLSKAEMAGYVEKLMPGQSASTSYSGFHNWDDLSHSNYTSANKASYLSYGSGVSAGSTLVMNLNKDVAGRLEWVAPVTITVIYS.

The N-terminal stretch at methionine 1–alanine 22 is a signal peptide.

It belongs to the fimbrial K88 protein family.

It localises to the fimbrium. Functionally, fimbriae (also called pili), polar filaments radiating from the surface of the bacterium to a length of 0.5-1.5 micrometers and numbering 100-300 per cell, enable bacteria to colonize the epithelium of specific host organs. This is F41 fimbrial protein (FimF41a) from Escherichia coli.